The sequence spans 339 residues: DNA-directed RNA polymerase subunit alpha (339 aa).

The segment at 1 to 235 is alpha N-terminal domain (alpha-NTD); that stretch reads MVLQKNWQSL…DQLQLFINFD (235 aa). The alpha C-terminal domain (alpha-CTD) stretch occupies residues 251–339; it reads FNRNLLRKVD…DLAKRLDEPF (89 aa).

Belongs to the RNA polymerase alpha chain family. As to quaternary structure, homodimer. The RNAP catalytic core consists of 2 alpha, 1 beta, 1 beta' and 1 omega subunit. When a sigma factor is associated with the core the holoenzyme is formed, which can initiate transcription.

The enzyme catalyses RNA(n) + a ribonucleoside 5'-triphosphate = RNA(n+1) + diphosphate. Its function is as follows. DNA-dependent RNA polymerase catalyzes the transcription of DNA into RNA using the four ribonucleoside triphosphates as substrates. In Gluconacetobacter diazotrophicus (strain ATCC 49037 / DSM 5601 / CCUG 37298 / CIP 103539 / LMG 7603 / PAl5), this protein is DNA-directed RNA polymerase subunit alpha.